Consider the following 101-residue polypeptide: Small ribosomal subunit protein uS14 (101 aa).

A compositionally biased stretch (basic and acidic residues) spans 1-10; the sequence is MAKKSSIEKN. The disordered stretch occupies residues 1-24; sequence MAKKSSIEKNNRRKRLTKNAAPKR. The span at 11 to 24 shows a compositional bias: basic residues; sequence NRRKRLTKNAAPKR.

Belongs to the universal ribosomal protein uS14 family. Part of the 30S ribosomal subunit. Contacts proteins S3 and S10.

Binds 16S rRNA, required for the assembly of 30S particles and may also be responsible for determining the conformation of the 16S rRNA at the A site. The polypeptide is Small ribosomal subunit protein uS14 (Rhodopseudomonas palustris (strain BisB18)).